The following is a 1012-amino-acid chain: Autotransporter adhesin BpaC (1012 aa).

An N-terminal signal peptide occupies residues 1–71 (MNRIFKSIWC…PFAEEAMAAN (71 aa)). The surface exposed passenger domain stretch occupies residues 72–921 (NAGVCLTYNG…VGQLNSAVSG (850 aa)). Disordered stretches follow at residues 420 to 746 (GLQG…AGAT) and 785 to 809 (ENST…ESAA). The span at 427–442 (ANTGTASGDNSTASGD) shows a compositional bias: polar residues. Residues 443–504 (NATASGTNST…ANGTNSTASG (62 aa)) show a composition bias toward low complexity. Over residues 505-519 (DNSTASGTNASATGE) the composition is skewed to polar residues. Positions 520–588 (NSTATGTDST…ANGTNSTASG (69 aa)) are enriched in low complexity. Over residues 589 to 603 (DNSTASGTNASATGE) the composition is skewed to polar residues. Residues 604-630 (NSTATGTDSTASGSNSTANGTNSTASG) are compositionally biased toward low complexity. A compositionally biased stretch (polar residues) spans 631–645 (DNSTASGTNASATGE). Low complexity-rich tracts occupy residues 646-700 (NSTA…TASG) and 708-746 (TNAS…AGAT). The segment at 922–959 (IRNQMDGMQGQIDTLARDAYSGIAAATALTMIPDVDPG) is outer membrane translocation of the passenger domain. Residues 960-1012 (KTLAVGIGTANFKGYQASALGATARITQNLKVKTGVSYSGSNYVWGAGMSYQW) form a translocator domain region.

It belongs to the autotransporter-2 (AT-2) (TC 1.B.40) family. In terms of assembly, homotrimer.

The protein localises to the cell surface. The protein resides in the cell outer membrane. Involved in virulence. Mediates adherence to human respiratory epithelial cells. This is Autotransporter adhesin BpaC from Burkholderia mallei (strain ATCC 23344).